A 372-amino-acid chain; its full sequence is N-methyl-L-tryptophan oxidase (372 aa).

Position 4–34 (4–34 (DLIIIGSGSVGAAAGYYATRAGLNVLMTDAH)) interacts with FAD. Cys308 carries the S-8alpha-FAD cysteine modification.

The protein belongs to the MSOX/MTOX family. MTOX subfamily. As to quaternary structure, monomer. The cofactor is FAD.

It carries out the reaction N(alpha)-methyl-L-tryptophan + O2 + H2O = L-tryptophan + formaldehyde + H2O2. In terms of biological role, catalyzes the oxidative demethylation of N-methyl-L-tryptophan. The protein is N-methyl-L-tryptophan oxidase of Escherichia coli O6:H1 (strain CFT073 / ATCC 700928 / UPEC).